The sequence spans 69 residues: DNA gyrase inhibitor YacG (69 aa).

The Zn(2+) site is built by C9, C12, C28, and C32. Positions 48 to 69 (PVSPDAEDELFSGDLEAPHRGH) are disordered.

This sequence belongs to the DNA gyrase inhibitor YacG family. Interacts with GyrB. Zn(2+) serves as cofactor.

Its function is as follows. Inhibits all the catalytic activities of DNA gyrase by preventing its interaction with DNA. Acts by binding directly to the C-terminal domain of GyrB, which probably disrupts DNA binding by the gyrase. This Pseudomonas syringae pv. syringae (strain B728a) protein is DNA gyrase inhibitor YacG.